The chain runs to 119 residues: Phosphoribosyl-AMP cyclohydrolase (119 aa).

Aspartate 77 contributes to the Mg(2+) binding site. Cysteine 78 contacts Zn(2+). Mg(2+)-binding residues include aspartate 79 and aspartate 81. Residues cysteine 94 and cysteine 101 each contribute to the Zn(2+) site.

Belongs to the PRA-CH family. In terms of assembly, homodimer. Mg(2+) serves as cofactor. It depends on Zn(2+) as a cofactor.

The protein localises to the cytoplasm. The catalysed reaction is 1-(5-phospho-beta-D-ribosyl)-5'-AMP + H2O = 1-(5-phospho-beta-D-ribosyl)-5-[(5-phospho-beta-D-ribosylamino)methylideneamino]imidazole-4-carboxamide. It participates in amino-acid biosynthesis; L-histidine biosynthesis; L-histidine from 5-phospho-alpha-D-ribose 1-diphosphate: step 3/9. In terms of biological role, catalyzes the hydrolysis of the adenine ring of phosphoribosyl-AMP. This Ruegeria pomeroyi (strain ATCC 700808 / DSM 15171 / DSS-3) (Silicibacter pomeroyi) protein is Phosphoribosyl-AMP cyclohydrolase.